Reading from the N-terminus, the 568-residue chain is Methyl-accepting chemotaxis protein CtpH (568 aa).

The Cytoplasmic segment spans residues 1–39; that stretch reads MPASPGHRDVLGCLVAACVPVQPGNPSRRSMLQQSLRAQ. A helical membrane pass occupies residues 40–60; sequence ILVLLGGSLAALLLIALACFG. Residues 61 to 216 are Periplasmic-facing; sequence SLTGDVRAYR…ISAEARRTML (156 aa). The helical transmembrane segment at 217–237 threads the bilayer; that stretch reads LGSLVLIGASLAVALLSLWLV. Residues 238–568 lie on the Cytoplasmic side of the membrane; the sequence is NRNLVRPVQR…LGDALQRLRA (331 aa). The region spanning 239–291 is the HAMP domain; it reads RNLVRPVQRLIEHIAQLSHGDFGERIEIRRKDELGKLALAANTLRDFLVDIFD. The Methyl-accepting transducer domain maps to 296–532; sequence STRDLDSASG…EISRNLTEIA (237 aa).

Belongs to the methyl-accepting chemotaxis (MCP) protein family.

Its subcellular location is the cell inner membrane. Functionally, chemotactic-signal transducers respond to changes in the concentration of attractants and repellents in the environment, transduce a signal from the outside to the inside of the cell, and facilitate sensory adaptation through the variation of the level of methylation. Chemoreceptor for inorganic phosphate, which is required for taxis at high concentrations of phosphate. Recognizes inorganic phosphate directly. Can also bind to other components that have a pyrophosphate group, including ATP and ADP. The polypeptide is Methyl-accepting chemotaxis protein CtpH (Pseudomonas aeruginosa (strain ATCC 15692 / DSM 22644 / CIP 104116 / JCM 14847 / LMG 12228 / 1C / PRS 101 / PAO1)).